Here is a 185-residue protein sequence, read N- to C-terminus: Dehydrin ERD14 (185 aa).

Basic and acidic residues-rich tracts occupy residues 1-13, 25-45, 52-78, and 103-134; these read MAEEIKNVPEQEV, VTDRGLFDFLGKKKDETKPEE, FEQKVHISEPEPEVKHESLLEKLHRSD, and KPTTEVEVKEEEKKGFMEKLKEKLPGHKKPED. Disordered regions lie at residues 1–138 and 166–185; these read MAEE…GSAV and EKLPGYHPKTTVEEEKKDKE. At Ala-2 the chain carries N-acetylalanine. Residue Ser-59 is modified to Phosphoserine. 2 repeat units span residues 112–132 and 154–174. The tract at residues 112–174 is 2 X 21 AA repeats, Lys-rich; sequence EEEKKGFMEK…KEKLPGYHPK (63 aa).

It belongs to the plant dehydrin family. As to expression, in stems, cauline leaves, roots and flowers. Low levels found in maturing seeds. Absent in dry seeds.

In terms of biological role, intrinsically disordered protein acting as a chaperone. Prevents heat-induced aggregation and/or inactivation of various substrates. Binds to acidic phospholipid vesicles without affecting membrane fluidity. This Arabidopsis thaliana (Mouse-ear cress) protein is Dehydrin ERD14 (ERD14).